A 643-amino-acid polypeptide reads, in one-letter code: MKLRKAWLLVLLLALTQLLAAASAEDAHEDASDSENPIEDDDDEEEDEEDEDDLEVKEENGVWVLNDENFDNFVADKDTVLLEFYAPWCGHCKQFAPEYEKIASTLKDNDPPIAVAKIDATSASMLASKFDVSGYPTIKILKKGQAVDYDGSRTQEEIVAKVREVSQPDWTPPPEVTLTLTKENFDDVVNNADIILVEFYAPWCGHCKKLAPEYEKAAKELSKRSPPIPLAKVDATEQTDLAKRFDVSGYPTLKIFRKGRPFDYNGPREKYGIVDYMVEQSGPPSKEILTLKQVQEFLKDGDDVVILGVFQGVGDPGYLQYQDAANTLREDYKFHHTFSTEIAKFLKVSLGKLVLMQPEKFQSKYEPRMHVMDVQGSTEASAIKDYVVKHALPLVGHRKTSNDAKRYSKRPLVVVYYSVDFSFDYRTATQFWRNKVLEVAKDFPEYTFAIADEEDYATEVKDLGLSESGEDVNAAILDESGKKFAMEPEEFDSDALQEFVMAFKKGKLKPVIKSQPVPKNNKGPVRVVVGKTFDAIVMDPKKDVLIEFYAPWCGHCKQLEPVYTSLGKKYKGQKDLVIAKMDATANDITNDRYKVEGFPTIYFAPSGDKKNPIKFEGGNRDLEHLSKFIDEHATKRSRTKEEL.

Positions methionine 1–alanine 20 are cleaved as a signal peptide. 2 Thioredoxin domains span residues alanine 21 to glutamine 167 and glutamine 167 to lysine 299. The interval alanine 24 to glutamate 58 is disordered. A compositionally biased stretch (acidic residues) spans serine 32 to valine 56. Positions cysteine 89–cysteine 92 match the CXXC motif. 2 cysteine pairs are disulfide-bonded: cysteine 89–cysteine 92 and cysteine 204–cysteine 207. Lysine 364 is modified (N6-acetyllysine). A Thioredoxin 3 domain is found at phenylalanine 503 to threonine 634. A CXXC motif is present at residues cysteine 553–cysteine 556. Cysteine 553 and cysteine 556 form a disulfide bridge. Positions lysine 640–leucine 643 match the Prevents secretion from ER motif.

The protein belongs to the protein disulfide isomerase family. As to quaternary structure, part of a large chaperone multiprotein complex comprising DNAJB11, HSP90B1, HSPA5, HYOU, PDIA2, PDIA4, PDIA6, PPIB, SDF2L1, UGGT1 and very small amounts of ERP29, but not, or at very low levels, CALR nor CANX. Component of a complex containing at least CRELD2, MANF, MATN3 and PDIA4. Post-translationally, O-glycosylated.

It is found in the endoplasmic reticulum lumen. The protein resides in the melanosome. It carries out the reaction Catalyzes the rearrangement of -S-S- bonds in proteins.. This Rattus norvegicus (Rat) protein is Protein disulfide-isomerase A4 (Pdia4).